Here is a 1029-residue protein sequence, read N- to C-terminus: Probable E3 ubiquitin protein ligase C167.07c (1029 aa).

In terms of domain architecture, IQ spans 46 to 75 (AENNSVAVQSLSRGFLARRKFKQDFRERWI). One can recognise an HECT domain in the interval 692 to 1029 (FGKLLKGPIR…VRSGVGFGFS (338 aa)). The Glycyl thioester intermediate role is filled by C997.

The protein localises to the cytoplasm. The protein resides in the nucleus. It carries out the reaction S-ubiquitinyl-[E2 ubiquitin-conjugating enzyme]-L-cysteine + [acceptor protein]-L-lysine = [E2 ubiquitin-conjugating enzyme]-L-cysteine + N(6)-ubiquitinyl-[acceptor protein]-L-lysine.. Probable E3 ubiquitin-protein ligase which mediates ubiquitination and subsequent proteasomal degradation of target proteins. The protein is Probable E3 ubiquitin protein ligase C167.07c of Schizosaccharomyces pombe (strain 972 / ATCC 24843) (Fission yeast).